Consider the following 104-residue polypeptide: Gastrin (104 aa).

Positions 1-21 (MQRLCVCVLILALALTAFSEA) are cleaved as a signal peptide. The tract at residues 22–49 (SWKPRSQLQDAPSGPGANGGLEPHWLNR) is disordered. A propeptide spanning residues 22-58 (SWKPRSQLQDAPSGPGANGGLEPHWLNRLGPASHHRW) is cleaved from the precursor. Gln-59 and Gln-76 each carry pyrrolidone carboxylic acid. Tyr-87 is subject to Sulfotyrosine. At Phe-92 the chain carries Phenylalanine amide. Ser-96 is modified (phosphoserine). A propeptide spanning residues 96–104 (SAEDGDQHP) is cleaved from the precursor.

This sequence belongs to the gastrin/cholecystokinin family.

The protein resides in the secreted. Functionally, gastrin stimulates the stomach mucosa to produce and secrete hydrochloric acid and the pancreas to secrete its digestive enzymes. It also stimulates smooth muscle contraction and increases blood circulation and water secretion in the stomach and intestine. This is Gastrin (GAST) from Felis catus (Cat).